Reading from the N-terminus, the 721-residue chain is Glycine--tRNA ligase beta subunit (721 aa).

It belongs to the class-II aminoacyl-tRNA synthetase family. Tetramer of two alpha and two beta subunits.

Its subcellular location is the cytoplasm. The catalysed reaction is tRNA(Gly) + glycine + ATP = glycyl-tRNA(Gly) + AMP + diphosphate. This chain is Glycine--tRNA ligase beta subunit, found in Sinorhizobium medicae (strain WSM419) (Ensifer medicae).